The following is a 249-amino-acid chain: Isoprenyl transferase (249 aa).

Aspartate 29 is an active-site residue. Aspartate 29 is a binding site for Mg(2+). Residues 30–33 (GNGR), tryptophan 34, arginine 42, histidine 46, and 74–76 (STE) contribute to the substrate site. Asparagine 77 functions as the Proton acceptor in the catalytic mechanism. Substrate is bound by residues tryptophan 78, arginine 80, arginine 197, and 203 to 205 (RLS). Residue glutamate 216 participates in Mg(2+) binding.

The protein belongs to the UPP synthase family. In terms of assembly, homodimer. Mg(2+) is required as a cofactor.

Its function is as follows. Catalyzes the condensation of isopentenyl diphosphate (IPP) with allylic pyrophosphates generating different type of terpenoids. The sequence is that of Isoprenyl transferase from Trichormus variabilis (strain ATCC 29413 / PCC 7937) (Anabaena variabilis).